A 326-amino-acid chain; its full sequence is ATP synthase gamma chain (326 aa).

The protein belongs to the ATPase gamma chain family. F-type ATPases have 2 components, CF(1) - the catalytic core - and CF(0) - the membrane proton channel. CF(1) has five subunits: alpha(3), beta(3), gamma(1), delta(1), epsilon(1). CF(0) has three main subunits: a, b and c.

The protein resides in the cell membrane. Produces ATP from ADP in the presence of a proton gradient across the membrane. The gamma chain is believed to be important in regulating ATPase activity and the flow of protons through the CF(0) complex. The protein is ATP synthase gamma chain of Rhodococcus jostii (strain RHA1).